A 217-amino-acid polypeptide reads, in one-letter code: Enoyl-CoA-hydratase (217 aa).

The protein belongs to the enoyl-CoA hydratase/isomerase family.

The enzyme catalyses a (3S)-3-hydroxyacyl-CoA = a (2E)-enoyl-CoA + H2O. It catalyses the reaction a 4-saturated-(3S)-3-hydroxyacyl-CoA = a (3E)-enoyl-CoA + H2O. The protein operates within antibiotic biosynthesis; vancomycin biosynthesis. Its function is as follows. Involved in the biosynthesis of the nonproteinogenic amino acid monomer (S)-3,5-dihydroxyphenylglycine (Dpg) responsible of the production of vancomycin and teicoplanin antibiotics. Catalyzes the syn-addition of a water molecule across the double bond of a trans-2-enoyl-CoA thioester, resulting in the formation of a beta-hydroxyacyl-CoA thioester. Physiologically, DpgB could act as a dehydratase, facilitating the aromatization of the DPA-S-DgpA or DPA-S-CoA intermediate. This Amycolatopsis orientalis (Nocardia orientalis) protein is Enoyl-CoA-hydratase (dpgB).